The chain runs to 96 residues: Protein Vpr (96 aa).

The segment at 1–42 (MEQAPEDQGPQREPNNEWTLEILEELKREAVRHFPRPWLHNL) is homooligomerization. Phosphoserine; by host occurs at positions 79, 94, and 96.

Belongs to the HIV-1 VPR protein family. In terms of assembly, homooligomer, may form homodimer. Interacts with p6-gag region of the Pr55 Gag precursor protein through a (Leu-X-X)4 motif near the C-terminus of the P6gag protein. Interacts with host UNG. May interact with host RAD23A/HHR23A. Interacts with host VPRBP/DCAF1, leading to hijack the CUL4A-RBX1-DDB1-DCAF1/VPRBP complex, mediating ubiquitination of host proteins such as TERT and ZGPAT and arrest of the cell cycle in G2 phase. Phosphorylated on several residues by host. These phosphorylations regulate VPR activity for the nuclear import of the HIV-1 pre-integration complex.

The protein resides in the virion. It localises to the host nucleus. The protein localises to the host extracellular space. Functionally, during virus replication, may deplete host UNG protein, and incude G2-M cell cycle arrest. Acts by targeting specific host proteins for degradation by the 26S proteasome, through association with the cellular CUL4A-DDB1 E3 ligase complex by direct interaction with host VPRPB/DCAF-1. Cell cycle arrest reportedly occurs within hours of infection and is not blocked by antiviral agents, suggesting that it is initiated by the VPR carried into the virion. Additionally, VPR induces apoptosis in a cell cycle dependent manner suggesting that these two effects are mechanistically linked. Detected in the serum and cerebrospinal fluid of AIDS patient, VPR may also induce cell death to bystander cells. In terms of biological role, during virus entry, plays a role in the transport of the viral pre-integration (PIC) complex to the host nucleus. This function is crucial for viral infection of non-dividing macrophages. May act directly at the nuclear pore complex, by binding nucleoporins phenylalanine-glycine (FG)-repeat regions. The chain is Protein Vpr from Human immunodeficiency virus type 1 group M subtype K (isolate 96CM-MP535) (HIV-1).